Reading from the N-terminus, the 167-residue chain is Small ribosomal subunit protein uS7c (167 aa).

This sequence belongs to the universal ribosomal protein uS7 family. As to quaternary structure, part of the 30S ribosomal subunit.

The protein localises to the plastid. It localises to the chloroplast. One of the primary rRNA binding proteins, it binds directly to 16S rRNA where it nucleates assembly of the head domain of the 30S subunit. In Tetradesmus obliquus (Green alga), this protein is Small ribosomal subunit protein uS7c (rps7).